A 38-amino-acid chain; its full sequence is Large ribosomal subunit protein bL36 (38 aa).

The protein belongs to the bacterial ribosomal protein bL36 family.

The protein is Large ribosomal subunit protein bL36 of Chlorobaculum parvum (strain DSM 263 / NCIMB 8327) (Chlorobium vibrioforme subsp. thiosulfatophilum).